Here is a 289-residue protein sequence, read N- to C-terminus: ATP synthase gamma chain (289 aa).

The protein belongs to the ATPase gamma chain family. In terms of assembly, F-type ATPases have 2 components, CF(1) - the catalytic core - and CF(0) - the membrane proton channel. CF(1) has five subunits: alpha(3), beta(3), gamma(1), delta(1), epsilon(1). CF(0) has three main subunits: a, b and c.

It localises to the cell membrane. Functionally, produces ATP from ADP in the presence of a proton gradient across the membrane. The gamma chain is believed to be important in regulating ATPase activity and the flow of protons through the CF(0) complex. In Mycoplasmopsis synoviae (strain 53) (Mycoplasma synoviae), this protein is ATP synthase gamma chain.